The following is a 619-amino-acid chain: Interferon-activable protein 204 (619 aa).

Positions 1–88 constitute a Pyrin domain; it reads MVNEYKRIVL…AEILKKERSE (88 aa). The Nuclear export signal motif lies at 24–35; sequence LFKSLLARDLNL. The segment covering 86 to 99 has biased composition (basic and acidic residues); it reads RSEVTGETSLEKNG. Residues 86-223 are disordered; that stretch reads RSEVTGETSL…QNQNIPRGAV (138 aa). Positions 122 to 153 are enriched in low complexity; sequence TSATQEETSTAQAGTSTAQARTSTAQAGTSTA. 3 repeat units span residues 134-140, 141-147, and 148-154. The tract at residues 134 to 154 is 3 X 7 AA tandem repeats of A-[GR]-T-S-T-A-Q; sequence AGTSTAQARTSTAQAGTSTAQ. The Nuclear localization signal signature appears at 150–157; the sequence is TSTAQKRK. Basic and acidic residues predominate over residues 159–176; sequence MREEETGVKKSKAAKEPD. The span at 190–206 shows a compositional bias: low complexity; it reads SPILHSSSSASSNIPSA. Positions 207 to 218 are enriched in polar residues; it reads KNQKSQPQNQNI. HIN-200 domains follow at residues 213-413 and 417-615; these read PQNQ…IKIS and NVPK…MQVI. The tract at residues 550-614 is interaction with ID2; the sequence is KKTERNKFIY…RSVRHSYMQV (65 aa).

Belongs to the HIN-200 family. As to quaternary structure, interacts with UBTF. Interacts with RUNX2. Interacts with ID1, ID2 and ID3. Interacts with STING. In terms of processing, acetylated upon bacterial infection, leading to translocation from nucleus to cytoplasm and subsequent recruitment of STING to activate IFN-beta production. In terms of tissue distribution, present in osteoblasts (at protein level).

The protein resides in the nucleus. It is found in the nucleolus. The protein localises to the cytoplasm. In terms of biological role, interferon-stimulated protein that plays a role in several biological processes including cell differentiation, autophagy and innate immunity. Cooperates with CGAS to sense dsDNA and activates the STING-dependent type I IFN pathway. Mechanistically, gets acetylated upon bacterial infection and then translocates from nucleus into cytoplasm to recruit STING for activation of TBK1-dependent IRF3 nuclear translocation and IFN-beta release. Inhibits the transcription of ribosomal RNA. May inhibit DNA binding by UBTF. Inhibits cell growth via p53/TP53 and RB1-dependent and independent pathways. Acts as a coactivator of RUNX2 during osteogenesis. May be involved in macrophage differentiation. Enables skeletal muscle and cardiac myocyte differentiation by sequestring Id proteins in the cytosol and promoting their ubiquitination and subsequent degradation. In Mus musculus (Mouse), this protein is Interferon-activable protein 204 (Ifi204).